The primary structure comprises 585 residues: Efflux pump dotC (585 aa).

The segment covering 1 to 34 (MSEDHTKADNLSEKDPHSPERSDSSSHEDAHARE) has biased composition (basic and acidic residues). The disordered stretch occupies residues 1–45 (MSEDHTKADNLSEKDPHSPERSDSSSHEDAHAREEEESSDDDGAL). An N-linked (GlcNAc...) asparagine glycan is attached at Asn10. Positions 35-44 (EEESSDDDGA) are enriched in acidic residues. A helical transmembrane segment spans residues 51-71 (SLIAIVMIALSLIGLQLAVFL). A glycan (N-linked (GlcNAc...) asparagine) is linked at Asn91. 13 helical membrane passes run 94 to 114 (AAYTWVGSAYLLANAASTPIW), 132 to 152 (ALFMIGSLVCALSINVGMLIT), 158 to 178 (GAAGGGLLTLVDTIIGDLFSL), 186 to 206 (GMIGGVWAIACALGPIVGGAF), 214 to 234 (WCFYINLPIDGLAFGIIFFFL), 247 to 267 (FAAIDWAGSFFIIGGTLMFLF), 280 to 300 (SATVICLLVFGVVCIVLFGLV), 323 to 343 (ALLVAFFHSFVFTSAFYYLPL), 353 to 373 (PILAGVYILPAVLSTGVSAAA), 385 to 405 (LIPMYFGMSMMILGYGLLINF), 414 to 434 (LIIYQLIAGIGNGPNFQAPLV), 449 to 471 (TATFNFVRNIATAISVVAGQVLY), and 524 to 544 (SPMWIMYTAFAAAGLFCILLV). The tract at residues 564 to 585 (KKAEAERKAERQAKDLEKAQKS) is disordered.

This sequence belongs to the major facilitator superfamily. TCR/Tet family.

The protein resides in the cell membrane. It localises to the vacuole membrane. Efflux pump; part of the gene cluster that mediates the biosynthesis of dothistromin (DOTH), a polyketide toxin very similar in structure to the aflatoxin precursor, versicolorin B. One function of dotC may be to transport early-stage dothistromin biosynthetic intermediates from the cytoplasm into vacuoles, thereby affecting the rate of dothistromin production. This chain is Efflux pump dotC, found in Dothistroma septosporum (Red band needle blight fungus).